The primary structure comprises 296 residues: Diheme cytochrome c-type (296 aa).

C52, C55, H56, C202, C205, and H206 together coordinate heme c.

Post-translationally, binds 2 heme c groups covalently per subunit.

It localises to the cell membrane. Particularly expressed when cells generate energy via aerobic respiration. In Cereibacter sphaeroides (strain ATCC 17023 / DSM 158 / JCM 6121 / CCUG 31486 / LMG 2827 / NBRC 12203 / NCIMB 8253 / ATH 2.4.1.) (Rhodobacter sphaeroides), this protein is Diheme cytochrome c-type (cycG).